The chain runs to 397 residues: 1-deoxy-D-xylulose 5-phosphate reductoisomerase (397 aa).

NADPH is bound by residues serine 10, glycine 11, serine 12, isoleucine 13, alanine 36, arginine 37, and asparagine 124. Residue lysine 125 participates in 1-deoxy-D-xylulose 5-phosphate binding. Glutamate 126 provides a ligand contact to NADPH. Aspartate 150 is a binding site for Mn(2+). 1-deoxy-D-xylulose 5-phosphate contacts are provided by serine 151, glutamate 152, serine 186, and histidine 209. Position 152 (glutamate 152) interacts with Mn(2+). Glycine 215 is an NADPH binding site. 1-deoxy-D-xylulose 5-phosphate contacts are provided by serine 222, asparagine 227, lysine 228, and glutamate 231. Position 231 (glutamate 231) interacts with Mn(2+).

The protein belongs to the DXR family. Mg(2+) is required as a cofactor. Requires Mn(2+) as cofactor.

It catalyses the reaction 2-C-methyl-D-erythritol 4-phosphate + NADP(+) = 1-deoxy-D-xylulose 5-phosphate + NADPH + H(+). It functions in the pathway isoprenoid biosynthesis; isopentenyl diphosphate biosynthesis via DXP pathway; isopentenyl diphosphate from 1-deoxy-D-xylulose 5-phosphate: step 1/6. Catalyzes the NADPH-dependent rearrangement and reduction of 1-deoxy-D-xylulose-5-phosphate (DXP) to 2-C-methyl-D-erythritol 4-phosphate (MEP). In Aeromonas salmonicida (strain A449), this protein is 1-deoxy-D-xylulose 5-phosphate reductoisomerase.